The primary structure comprises 363 residues: MSIEINNISKYFGRTKVLNDITLDIPSGQMVALLGPSGSGKTTLLRIIAGLENQNAGRLSFHGTDVSRLHARDRRVGFVFQHYALFRHMTVFDNIAFGLTVLPRRERPNAAAIKQKVGQLLEMVQLGHLAERFPSQLSGGQKQRVALARALAVEPQILLLDEPFGALDAQVRKELRRWLRQLHEELKFTSVFVTHDQEEAMEVADRVVVVSQGNIEQVGTPDEVWREPATRFVLEFLGEVNRLSGEIRGSQLFIGAHHWPLDLAPMHQGSVDLFLRPWEMEVSTQSSDRCPLPVQVLEVSPRGHFWQLTVQPIGWHQDPISVVLPEGNIDAPVRGNRYYVGGLNARLYSGNQLLQPIALAQSA.

The ABC transporter domain occupies 3 to 237 (IEINNISKYF…PATRFVLEFL (235 aa)). Residue 35-42 (GPSGSGKT) participates in ATP binding.

This sequence belongs to the ABC transporter superfamily. Sulfate/tungstate importer (TC 3.A.1.6) family. In terms of assembly, the complex is composed of two ATP-binding proteins (CysA), two transmembrane proteins (CysT and CysW) and a solute-binding protein (CysP).

The protein resides in the cell inner membrane. The catalysed reaction is sulfate(out) + ATP + H2O = sulfate(in) + ADP + phosphate + H(+). The enzyme catalyses thiosulfate(out) + ATP + H2O = thiosulfate(in) + ADP + phosphate + H(+). Functionally, part of the ABC transporter complex CysAWTP involved in sulfate/thiosulfate import. Responsible for energy coupling to the transport system. This Yersinia pestis protein is Sulfate/thiosulfate import ATP-binding protein CysA.